The primary structure comprises 279 residues: Thymidylate synthase (279 aa).

DUMP is bound at residue 133–134 (RR). The active-site Nucleophile is the Cys-154. Residues 178-181 (RSND), Asn-189, and 219-221 (HIY) each bind dUMP. Residue Asp-181 participates in (6R)-5,10-methylene-5,6,7,8-tetrahydrofolate binding. Ala-278 contributes to the (6R)-5,10-methylene-5,6,7,8-tetrahydrofolate binding site.

The protein belongs to the thymidylate synthase family. Bacterial-type ThyA subfamily. In terms of assembly, homodimer.

The protein resides in the cytoplasm. The catalysed reaction is dUMP + (6R)-5,10-methylene-5,6,7,8-tetrahydrofolate = 7,8-dihydrofolate + dTMP. It participates in pyrimidine metabolism; dTTP biosynthesis. Its function is as follows. Catalyzes the reductive methylation of 2'-deoxyuridine-5'-monophosphate (dUMP) to 2'-deoxythymidine-5'-monophosphate (dTMP) while utilizing 5,10-methylenetetrahydrofolate (mTHF) as the methyl donor and reductant in the reaction, yielding dihydrofolate (DHF) as a by-product. This enzymatic reaction provides an intracellular de novo source of dTMP, an essential precursor for DNA biosynthesis. This Streptococcus gordonii (strain Challis / ATCC 35105 / BCRC 15272 / CH1 / DL1 / V288) protein is Thymidylate synthase.